A 254-amino-acid chain; its full sequence is 5-oxoprolinase subunit A (254 aa).

Belongs to the LamB/PxpA family. As to quaternary structure, forms a complex composed of PxpA, PxpB and PxpC.

It catalyses the reaction 5-oxo-L-proline + ATP + 2 H2O = L-glutamate + ADP + phosphate + H(+). Functionally, catalyzes the cleavage of 5-oxoproline to form L-glutamate coupled to the hydrolysis of ATP to ADP and inorganic phosphate. The protein is 5-oxoprolinase subunit A of Burkholderia vietnamiensis (strain G4 / LMG 22486) (Burkholderia cepacia (strain R1808)).